The sequence spans 319 residues: Transaldolase (319 aa).

The active-site Schiff-base intermediate with substrate is the K132.

It belongs to the transaldolase family. Type 1 subfamily. Homodimer.

The protein localises to the cytoplasm. The catalysed reaction is D-sedoheptulose 7-phosphate + D-glyceraldehyde 3-phosphate = D-erythrose 4-phosphate + beta-D-fructose 6-phosphate. Its pathway is carbohydrate degradation; pentose phosphate pathway; D-glyceraldehyde 3-phosphate and beta-D-fructose 6-phosphate from D-ribose 5-phosphate and D-xylulose 5-phosphate (non-oxidative stage): step 2/3. In terms of biological role, transaldolase is important for the balance of metabolites in the pentose-phosphate pathway. The protein is Transaldolase of Alteromonas mediterranea (strain DSM 17117 / CIP 110805 / LMG 28347 / Deep ecotype).